Reading from the N-terminus, the 490-residue chain is Subtilisin-like protease 8 (490 aa).

A signal peptide spans 1–26 (MKGLLSLSVLPVLAYASPMIVDSIHQ). The propeptide occupies 27-134 (DAAPILSSTN…YIERDSEVRA (108 aa)). The 91-residue stretch at 43–133 (SYIVVFKKGV…EYIERDSEVR (91 aa)) folds into the Inhibitor I9 domain. In terms of domain architecture, Peptidase S8 spans 144–450 (PWGLARISHR…GGSDNYKEIV (307 aa)). Residues aspartate 180 and histidine 212 each act as charge relay system in the active site. N-linked (GlcNAc...) asparagine glycosylation is present at asparagine 282. The Charge relay system role is filled by serine 378. N-linked (GlcNAc...) asparagine glycosylation occurs at asparagine 455.

It belongs to the peptidase S8 family.

The protein localises to the secreted. Functionally, secreted subtilisin-like serine protease with keratinolytic activity that contributes to pathogenicity. The chain is Subtilisin-like protease 8 (SUB8) from Arthroderma otae (strain ATCC MYA-4605 / CBS 113480) (Microsporum canis).